Here is a 153-residue protein sequence, read N- to C-terminus: Fucose mutarotase (153 aa).

H24 serves as the catalytic Proton donor. Residue D32 coordinates substrate. D69 is a catalytic residue. Substrate-binding residues include M78, Y119, Y137, and N139. Residue Y119 is part of the active site.

Belongs to the RbsD / FucU family.

It carries out the reaction alpha-L-fucose = beta-L-fucose. In terms of biological role, involved in the interconversion between alpha- and beta-L-fucoses. This chain is Fucose mutarotase (fuom), found in Danio rerio (Zebrafish).